Here is a 435-residue protein sequence, read N- to C-terminus: Tol-Pal system protein TolB (435 aa).

The N-terminal stretch at 1–26 (MKTFSLLRILIVLVGMAGAFATPAMA) is a signal peptide.

It belongs to the TolB family. The Tol-Pal system is composed of five core proteins: the inner membrane proteins TolA, TolQ and TolR, the periplasmic protein TolB and the outer membrane protein Pal. They form a network linking the inner and outer membranes and the peptidoglycan layer.

It is found in the periplasm. Its function is as follows. Part of the Tol-Pal system, which plays a role in outer membrane invagination during cell division and is important for maintaining outer membrane integrity. The polypeptide is Tol-Pal system protein TolB (Allorhizobium ampelinum (strain ATCC BAA-846 / DSM 112012 / S4) (Agrobacterium vitis (strain S4))).